Consider the following 261-residue polypeptide: Indole-3-glycerol phosphate synthase (261 aa).

It belongs to the TrpC family.

The enzyme catalyses 1-(2-carboxyphenylamino)-1-deoxy-D-ribulose 5-phosphate + H(+) = (1S,2R)-1-C-(indol-3-yl)glycerol 3-phosphate + CO2 + H2O. It participates in amino-acid biosynthesis; L-tryptophan biosynthesis; L-tryptophan from chorismate: step 4/5. This Burkholderia ambifaria (strain ATCC BAA-244 / DSM 16087 / CCUG 44356 / LMG 19182 / AMMD) (Burkholderia cepacia (strain AMMD)) protein is Indole-3-glycerol phosphate synthase.